Here is a 365-residue protein sequence, read N- to C-terminus: Endophilin-B1 (365 aa).

Position 1 is an N-acetylmethionine (Met-1). A membrane-binding amphipathic helix region spans residues 1–30 (MNIMDFNVKKLAADAGTFLSRAVQFTEEKL). The required for membrane binding stretch occupies residues 1–37 (MNIMDFNVKKLAADAGTFLSRAVQFTEEKLGQAEKTE). The region spanning 27–261 (EEKLGQAEKT…LGSFPSNYVS (235 aa)) is the BAR domain. Phosphothreonine; by CDK5 is present on Thr-145. The stretch at 156-185 (KTIAKERKLLQNKRLDLDAAKTRLKKAKAA) forms a coiled coil. The 61-residue stretch at 305–365 (SSTRKARVLY…VPITYLELLN (61 aa)) folds into the SH3 domain.

The protein belongs to the endophilin family. As to quaternary structure, homodimer, and heterodimer with SH3GLB2. Binds BAX; induction of apoptosis augments BAX binding. Binds DNM1, HTT, AMPH, BIN1 and ARFGAP1. Interacts with UVRAG; UVRAG bridges the interaction to BECN1 indicative for an association with the PI3K complex II (PI3KC3-C2). Post-translationally, phosphorylated at Thr-145 by CDK5; this phosphorylation is required for autophagy induction in starved neurons and facilitates homodimerization. In terms of tissue distribution, expressed in brain, heart, lung and spleen. Low level in liver and testis.

It is found in the cytoplasm. It localises to the golgi apparatus membrane. The protein resides in the mitochondrion outer membrane. Its subcellular location is the cytoplasmic vesicle. The protein localises to the autophagosome membrane. It is found in the midbody. Its function is as follows. May be required for normal outer mitochondrial membrane dynamics. Required for coatomer-mediated retrograde transport in certain cells. May recruit other proteins to membranes with high curvature. May promote membrane fusion. Involved in activation of caspase-dependent apoptosis by promoting BAX/BAK1 activation. Involved in caspase-independent apoptosis during nutrition starvation and involved in the regulation of autophagy. Activates lipid kinase activity of PIK3C3 during autophagy probably by associating with the PI3K complex II (PI3KC3-C2). Associated with PI3KC3-C2 during autophagy may regulate the trafficking of ATG9A from the Golgi complex to the peripheral cytoplasm for the formation of autophagosomes by inducing Golgi membrane tubulation and fragmentation. Involved in regulation of degradative endocytic trafficking and cytokinesis, probably in the context of PI3KC3-C2. The polypeptide is Endophilin-B1 (Rattus norvegicus (Rat)).